Consider the following 141-residue polypeptide: Large ribosomal subunit protein uL11 (141 aa).

The protein belongs to the universal ribosomal protein uL11 family. Part of the ribosomal stalk of the 50S ribosomal subunit. Interacts with L10 and the large rRNA to form the base of the stalk. L10 forms an elongated spine to which L12 dimers bind in a sequential fashion forming a multimeric L10(L12)X complex. One or more lysine residues are methylated.

Functionally, forms part of the ribosomal stalk which helps the ribosome interact with GTP-bound translation factors. The chain is Large ribosomal subunit protein uL11 from Chlamydia trachomatis serovar L2 (strain ATCC VR-902B / DSM 19102 / 434/Bu).